Here is a 560-residue protein sequence, read N- to C-terminus: Factor VII-activating protease (560 aa).

Positions 1–23 are cleaved as a signal peptide; that stretch reads MFARMSDLHVLLLMALVGKTACG. Residue Asn54 is glycosylated (N-linked (GlcNAc...) asparagine). EGF-like domains are found at residues 73–109, 111–148, and 150–188; these read QADPCQPNPCEHGGDCLVHGSTFTCSCLAPFSGNKCQ, VQNTCKDNPCGRGQCLITQSPPYYRCVCKHPYTGPSCS, and VVPVCRPNPCQNGATCSRHKRRSKFTCACPDQFKGKFCE. 18 disulfides stabilise this stretch: Cys77–Cys88, Cys82–Cys97, Cys99–Cys108, Cys115–Cys125, Cys120–Cys136, Cys138–Cys147, Cys154–Cys165, Cys159–Cys176, Cys178–Cys187, Cys194–Cys276, Cys215–Cys257, Cys246–Cys271, Cys301–Cys435, Cys347–Cys363, Cys355–Cys424, Cys447–Cys515, Cys477–Cys493, and Cys505–Cys533. A Kringle domain is found at 193–276; it reads DCYVGDGYSY…KWEYCDVSAC (84 aa). Asn207 carries an N-linked (GlcNAc...) asparagine glycan. One can recognise a Peptidase S1 domain in the interval 314–555; it reads IYGGFKSTAG…FLNWIKATIK (242 aa). Residues His362 and Asp411 each act as charge relay system in the active site. Ser509 acts as the Charge relay system in catalysis.

Belongs to the peptidase S1 family. In terms of assembly, heterodimer; disulfide-linked. Heterodimer of a 50 kDa heavy and a 27 kDa light chain linked by a disulfide bond. In terms of processing, proteolytic cleavage at Gly-23 or Met-27 can give rise to the 50 kDa heavy chain (HC) and cleavage at Arg-313 or Lys-319 can give rise to the 27 kDa light chain (LC). The HC can undergo further proteolytic cleavage giving rise to a 26 kDa fragment. The LC can undergo further proteolytic cleavage at Arg-313 leading to a 17-kDa fragment and at Arg-480 leading to a 8-kDa fragment. In terms of tissue distribution, ubiquitously expressed.

The protein resides in the secreted. Functionally, cleaves the alpha-chain at multiple sites and the beta-chain between 'Lys-53' and 'Lys-54' but not the gamma-chain of fibrinogen and therefore does not initiate the formation of the fibrin clot and does not cause the fibrinolysis directly. It does not cleave (activate) prothrombin and plasminogen but converts the inactive single chain urinary plasminogen activator (pro-urokinase) to the active two chain form. Activates coagulation factor VII. May function as a tumor suppressor negatively regulating cell proliferation and cell migration. The protein is Factor VII-activating protease of Homo sapiens (Human).